The sequence spans 856 residues: Valine--tRNA ligase (856 aa).

The 'HIGH' region motif lies at 47–57; that stretch reads PTASGVLHIGH. A 'KMSKS' region motif is present at residues 578-582; sequence KMSKS. Position 581 (K581) interacts with ATP.

The protein belongs to the class-I aminoacyl-tRNA synthetase family. ValS type 2 subfamily. As to quaternary structure, monomer.

The protein resides in the cytoplasm. The enzyme catalyses tRNA(Val) + L-valine + ATP = L-valyl-tRNA(Val) + AMP + diphosphate. In terms of biological role, catalyzes the attachment of valine to tRNA(Val). As ValRS can inadvertently accommodate and process structurally similar amino acids such as threonine, to avoid such errors, it has a 'posttransfer' editing activity that hydrolyzes mischarged Thr-tRNA(Val) in a tRNA-dependent manner. The chain is Valine--tRNA ligase from Tropheryma whipplei (strain Twist) (Whipple's bacillus).